The following is a 295-amino-acid chain: Small ribosomal subunit protein uS2 (295 aa).

An N-acetylserine modification is found at S2. A Phosphoserine modification is found at S43. K52 bears the N6-acetyllysine mark. Positions 54–113 (TWEKLLLAARAIVAIENPADVSVISSRNTGQRAVLKFAAATGATPIAGRFTPGTFTNQIQ) are interaction with PPP1R16B. K89 is subject to N6-acetyllysine; alternate. A Glycyl lysine isopeptide (Lys-Gly) (interchain with G-Cter in SUMO2); alternate cross-link involves residue K89. T97 carries the phosphothreonine modification. Laminin-binding stretches follow at residues 161-180 (IPCN…MLAR) and 205-229 (RDPE…EFQG). 5 [DE]-W-[ST] repeats span residues 230–232 (EWT), 247–249 (DWS), 266–268 (DWS), 275–277 (DWS), and 293–295 (EWS). Residues 242–295 (QPEVADWSEGVQVPSVPIQQFPTEDWSAQPTTEDWSAAPTAQATEWVGTTTEWS) are laminin-binding. The disordered stretch occupies residues 266–295 (DWSAQPTTEDWSAAPTAQATEWVGTTTEWS).

The protein belongs to the universal ribosomal protein uS2 family. In terms of assembly, monomer (37LRP) and homodimer (67LR). Component of the small ribosomal subunit. Mature ribosomes consist of a small (40S) and a large (60S) subunit. The 40S subunit contains about 33 different proteins and 1 molecule of RNA (18S). The 60S subunit contains about 49 different proteins and 3 molecules of RNA (28S, 5.8S and 5S). Interacts with RPS21. Interacts with several laminins including at least LAMB1. Interacts with MDK. The mature dimeric form interacts with PPP1R16B (via its fourth ankyrin repeat). Interacts with PPP1CA only in the presence of PPP1R16B. Acylated. Acylation may be a prerequisite for conversion of the monomeric 37 kDa laminin receptor precursor (37LRP) to the mature dimeric 67 kDa laminin receptor (67LR), and may provide a mechanism for membrane association. Post-translationally, cleaved by stromelysin-3 (ST3) at the cell surface. Cleavage by stromelysin-3 may be a mechanism to alter cell-extracellular matrix interactions.

Its subcellular location is the cell membrane. It is found in the cytoplasm. It localises to the nucleus. Its function is as follows. Required for the assembly and/or stability of the 40S ribosomal subunit. Required for the processing of the 20S rRNA-precursor to mature 18S rRNA in a late step of the maturation of 40S ribosomal subunits. Also functions as a cell surface receptor for laminin. Plays a role in cell adhesion to the basement membrane and in the consequent activation of signaling transduction pathways. May play a role in cell fate determination and tissue morphogenesis. Also acts as a receptor for several other ligands, including the pathogenic prion protein, viruses, and bacteria. Acts as a PPP1R16B-dependent substrate of PPP1CA. This Sus scrofa (Pig) protein is Small ribosomal subunit protein uS2.